Reading from the N-terminus, the 145-residue chain is Small ribosomal subunit protein uS12A (145 aa).

Position 64 is a hydroxyproline (Pro-64).

Belongs to the universal ribosomal protein uS12 family.

This is Small ribosomal subunit protein uS12A (RPS23A) from Naumovozyma castellii (Yeast).